The sequence spans 103 residues: Co-chaperonin GroES (103 aa).

The protein belongs to the GroES chaperonin family. Heptamer of 7 subunits arranged in a ring. Interacts with the chaperonin GroEL.

It localises to the cytoplasm. Functionally, together with the chaperonin GroEL, plays an essential role in assisting protein folding. The GroEL-GroES system forms a nano-cage that allows encapsulation of the non-native substrate proteins and provides a physical environment optimized to promote and accelerate protein folding. GroES binds to the apical surface of the GroEL ring, thereby capping the opening of the GroEL channel. The polypeptide is Co-chaperonin GroES (Prochlorococcus marinus subsp. pastoris (strain CCMP1986 / NIES-2087 / MED4)).